The chain runs to 206 residues: Probable GTP-binding protein EngB (206 aa).

The EngB-type G domain maps to 23-202; it reads HTAEVAFVGR…WGALLDTFGK (180 aa). Residues 31 to 38, 58 to 62, 83 to 86, 150 to 153, and 181 to 183 each bind GTP; these read GRSNVGKS, GRTRT, DLPG, TKVD, and FSS. 2 residues coordinate Mg(2+): S38 and T60.

It belongs to the TRAFAC class TrmE-Era-EngA-EngB-Septin-like GTPase superfamily. EngB GTPase family. Mg(2+) serves as cofactor.

Its function is as follows. Necessary for normal cell division and for the maintenance of normal septation. This chain is Probable GTP-binding protein EngB, found in Myxococcus xanthus (strain DK1622).